A 101-amino-acid polypeptide reads, in one-letter code: Small ribosomal subunit protein uS14 (101 aa).

It belongs to the universal ribosomal protein uS14 family. As to quaternary structure, part of the 30S ribosomal subunit. Contacts proteins S3 and S10.

Binds 16S rRNA, required for the assembly of 30S particles and may also be responsible for determining the conformation of the 16S rRNA at the A site. In Hahella chejuensis (strain KCTC 2396), this protein is Small ribosomal subunit protein uS14.